The primary structure comprises 60 residues: Metallothionein B (60 aa).

Residues methionine 1 to cysteine 28 form a beta region. Residues cysteine 4, cysteine 6, cysteine 12, cysteine 14, cysteine 18, cysteine 20, cysteine 23, cysteine 25, cysteine 28, cysteine 32, cysteine 33, cysteine 35, cysteine 36, cysteine 40, cysteine 43, cysteine 47, cysteine 49, cysteine 54, cysteine 58, and cysteine 59 each contribute to the a divalent metal cation site. The interval lysine 29–glutamine 60 is alpha.

It belongs to the metallothionein superfamily. Type 1 family.

Its function is as follows. Metallothioneins have a high content of cysteine residues that bind various heavy metals. The protein is Metallothionein B (mtb) of Chionodraco hamatus (Antarctic teleost icefish).